The primary structure comprises 513 residues: OBERON-like protein (513 aa).

A PHD-type zinc finger spans residues 166 to 235 (NGFCNLCMCV…VFRCQACSXT (70 aa)). A coiled-coil region spans residues 372-469 (RELADKAREA…LYEKIKLQES (98 aa)). A disordered region spans residues 493–513 (YNGPPKADSQSNDCHPFRTNP). The segment covering 500-513 (DSQSNDCHPFRTNP) has biased composition (polar residues).

Self-interacts and probably forms heteromers. Binds to VPg of pea seed borne mosaic virus (PSbMV), turnip mosaic virus (TuMV) and lettuce mosaic virus (LMV), but not with VPg of tobacco etch virus (TEV), cowpea mosaic virus (CPMV), tomato black ring virus (TBRV) and grapevine fan leaf virus (GFLV).

The protein resides in the nucleus. Functionally, required for the maintenance and/or establishment of both the shoot and root meristems, probably by controlling the expression of the meristem genes and of genes required for auxin responses. Involved in the development of the basal pole and in auxin-mediated root and vascular development in the embryo. Confers sensitivity to turnip mosaic virus (TuMV) probably by promoting viral movement and multiplication via interaction with TuMV VPg. This chain is OBERON-like protein (PVIP), found in Pisum sativum (Garden pea).